Here is a 560-residue protein sequence, read N- to C-terminus: Cilia- and flagella-associated protein 184 (560 aa).

A compositionally biased stretch (basic and acidic residues) spans 1–12 (MEGGSEHTKDPG). A disordered region spans residues 1 to 209 (MEGGSEHTKD…QEEGKPLGGR (209 aa)). Composition is skewed to acidic residues over residues 41 to 61 (GELESEPEEEEEEEEEEEEEA) and 101 to 110 (EPEEPAEAGA). Basic and acidic residues-rich tracts occupy residues 127–144 (AEARAEELEQAAEGKEVR) and 179–209 (ETRRDGAESEGRAGEGRPAKSQEEGKPLGGR). 2 coiled-coil regions span residues 357–481 (QAAL…QGRD) and 510–536 (DSLLRDLEEKVDKTQLLHQRLESLKRH).

It belongs to the CFAP184 family. In terms of assembly, forms a complex with CFAP263; the interaction is required for functional activity in cilia.

The protein resides in the cell projection. It is found in the cilium. It localises to the cytoplasm. Its subcellular location is the cytoskeleton. The protein localises to the microtubule organizing center. The protein resides in the centrosome. Functionally, in complex with CFAP263, acts as a regulator of ciliary beating that connects radial spoke 3 (RS3) to the inner dynein arm (IDA) and the nexin-dynein regulatory complex (N-DRC). The complex is positioned parallel to N-DRC and forms a connection between the arch at the base of RS3, the IDA tail and N-DRC. The sequence is that of Cilia- and flagella-associated protein 184 (CFAP184) from Macaca fascicularis (Crab-eating macaque).